Reading from the N-terminus, the 85-residue chain is Putative membrane protein insertion efficiency factor (85 aa).

The disordered stretch occupies residues 62-85 (PLGSDGYDPVPEPKDRKPPHSPAG).

This sequence belongs to the UPF0161 family.

It is found in the cell inner membrane. Functionally, could be involved in insertion of integral membrane proteins into the membrane. This is Putative membrane protein insertion efficiency factor from Ruegeria pomeroyi (strain ATCC 700808 / DSM 15171 / DSS-3) (Silicibacter pomeroyi).